The primary structure comprises 320 residues: Glucokinase (320 aa).

This sequence belongs to the ROK (NagC/XylR) family. In terms of assembly, monomer. A divalent metal cation is required as a cofactor.

It carries out the reaction D-glucose + ATP = D-glucose 6-phosphate + ADP + H(+). In terms of biological role, catalyzes the phosphorylation of D-glucose to D-glucose 6-phosphate using ATP as the phosphate donor. ITP can also serve as an effective phosphoryl donor. According to Hansen et al., the enzyme has a broad hexose specificity, and in addition to glucose, which shows the highest catalytic efficiency, it can also phosphorylate fructose, mannose, glucosamine, N-acetylglucosamine, N-acetylmannosamine and 2-deoxyglucose. However, according to Sakuraba et al., the enzyme shows strict specificity for D-glucose. This is Glucokinase from Aeropyrum pernix (strain ATCC 700893 / DSM 11879 / JCM 9820 / NBRC 100138 / K1).